Here is a 332-residue protein sequence, read N- to C-terminus: Ferredoxin--NADP reductase 1 (332 aa).

Residues Asp35, Lys43, Phe48, Val88, Phe123, Asp284, and Thr325 each contribute to the FAD site.

This sequence belongs to the ferredoxin--NADP reductase type 2 family. As to quaternary structure, homodimer. Requires FAD as cofactor.

It carries out the reaction 2 reduced [2Fe-2S]-[ferredoxin] + NADP(+) + H(+) = 2 oxidized [2Fe-2S]-[ferredoxin] + NADPH. This is Ferredoxin--NADP reductase 1 from Listeria welshimeri serovar 6b (strain ATCC 35897 / DSM 20650 / CCUG 15529 / CIP 8149 / NCTC 11857 / SLCC 5334 / V8).